Reading from the N-terminus, the 461-residue chain is Porin AaxA (461 aa).

Residues 1 to 22 form the signal peptide; sequence MSFRSVLLTALLSLSFTTTMQA.

It belongs to the OprB family.

The protein resides in the cell outer membrane. Functionally, facilitates L-arginine uptake, as part of the AaxABC system. The arginine uptake by the bacterium in the macrophage may be a virulence factor against the host innate immune response. The protein is Porin AaxA (aaxA) of Chlamydia trachomatis serovar L2 (strain ATCC VR-902B / DSM 19102 / 434/Bu).